Reading from the N-terminus, the 694-residue chain is uncharacterized protein (694 aa).

Residues 15–51 are a coiled coil; the sequence is HKEKMELLDQFDNERKEWESQWKIMQKKIEELCREVK. Disordered regions lie at residues 259–286, 461–490, and 643–680; these read LKRN…EQAY, QNHS…QSND, and NASH…RRTT. 2 stretches are compositionally biased toward polar residues: residues 272 to 283 and 476 to 490; these read STSRNFPSSDSE and DTSS…QSND. A compositionally biased stretch (low complexity) spans 663–677; the sequence is SRWASRSPSAPPALR.

This is an uncharacterized protein from Homo sapiens (Human).